A 121-amino-acid chain; its full sequence is Ribosome-binding factor A (121 aa).

It belongs to the RbfA family. As to quaternary structure, monomer. Binds 30S ribosomal subunits, but not 50S ribosomal subunits or 70S ribosomes.

The protein resides in the cytoplasm. In terms of biological role, one of several proteins that assist in the late maturation steps of the functional core of the 30S ribosomal subunit. Associates with free 30S ribosomal subunits (but not with 30S subunits that are part of 70S ribosomes or polysomes). Required for efficient processing of 16S rRNA. May interact with the 5'-terminal helix region of 16S rRNA. In Clostridium tetani (strain Massachusetts / E88), this protein is Ribosome-binding factor A.